The primary structure comprises 92 residues: Small ribosomal subunit protein uS19 (92 aa).

This sequence belongs to the universal ribosomal protein uS19 family.

Its function is as follows. Protein S19 forms a complex with S13 that binds strongly to the 16S ribosomal RNA. In Francisella tularensis subsp. tularensis (strain FSC 198), this protein is Small ribosomal subunit protein uS19.